Here is a 305-residue protein sequence, read N- to C-terminus: Phosphatidylglycerol--prolipoprotein diacylglyceryl transferase (305 aa).

The next 3 membrane-spanning stretches (helical) occupy residues 10–30 (FLIS…GAII), 59–79 (LMLG…AFEW), and 92–112 (LTTG…STVI). Arginine 140 contributes to the a 1,2-diacyl-sn-glycero-3-phospho-(1'-sn-glycerol) binding site. 2 consecutive transmembrane segments (helical) span residues 182-202 (LFHP…GILL) and 260-280 (IRVA…LIFL).

It belongs to the Lgt family.

The protein localises to the cell membrane. The enzyme catalyses L-cysteinyl-[prolipoprotein] + a 1,2-diacyl-sn-glycero-3-phospho-(1'-sn-glycerol) = an S-1,2-diacyl-sn-glyceryl-L-cysteinyl-[prolipoprotein] + sn-glycerol 1-phosphate + H(+). It functions in the pathway protein modification; lipoprotein biosynthesis (diacylglyceryl transfer). In terms of biological role, catalyzes the transfer of the diacylglyceryl group from phosphatidylglycerol to the sulfhydryl group of the N-terminal cysteine of a prolipoprotein, the first step in the formation of mature lipoproteins. The chain is Phosphatidylglycerol--prolipoprotein diacylglyceryl transferase from Chloroflexus aggregans (strain MD-66 / DSM 9485).